A 1537-amino-acid chain; its full sequence is MFHKEAGISHLILDIILEHALNKFDPAPDRLQGAAKNFLPIIERFVAAGTRIEACLPAFPFKSANKVYKVLGSLPDKAEELALDRLNTMCARVREVYPPGLQVAIISDGITYNDTWAYGEALRQMAAQKQFMYIVFSRIKDLLDIPLPEQMSEIVYVANCTTFRRLLLNKYERADLDIDHEIASNPDTKLTYLGYRRFLESDLKYIFPRGAHRSAHSYKRDCKYLAKQMLIRGDAFAQAIKTSYPNHLRLSIHESVAGTKLSISLLNTKTGFTTPWHCSVAQLANGEWISAPMGEFRKDDRLELVYADGRPSHFREKPREGDAFGISESTASYLQRPKRLRASEYLGATLPSVPVSPGMSSPSAASTSSSGASMQGSAATTPETHSPPTFTWSGLEIVAEDNSNNASVPYGRRLIPQIMDSLAATEPERIVFSLATFSGDSLEFRPISARTFANAIDKTAWWLHNQVGRPDSIQPVGYIGPHDLRHVLLTYACVKAGYAALFLSPKNSTEGALAVLEATKCDLWINACDVSPVPLVKEVLQKRPMNVLQLPQLDELLDAVSTDPFPYTKKFDEAINDPFCFLHTSGTTGVPKPIPWSHGLIGTMDAVRLLPPGADGDLPPWTTDWKTGDTIYSSFPMSHGAGIIMNILMPALFNLHCVFGPAGVLPNINLVDALAVSTRIDIWSMVPSLVDELGETPAVLSKLKSSKFICASGGPVSPVSAGKVNEVIRVLNLTGTTEGLFMGNLIPPREDWFWFCFHPYSGFEFKQVEPDTYEHWVHRNEHWPLFQGIFHTFPEKQSINFKDLYVRHPTKPNLWAFKGRSDDLVTEAFITTHPAIKGCLVFGTGKPQAGLLIELKDPLQKTDELLDSIWETVQQANSMSRHKNQLLRDFVAFATPDKPFCRTDKGTVKRSATLKLYADYIERFYRSRNDDLGGTFDFDMSSAHSIEDNVRKILAASLPDVQEASADTDLFALGLDSLGVFAAIKTIRAATGLGDQIGPRHIYANPTIARLSAIIALLAAAAESASDTTLCERPVDDVGAQIARMIAQHKARQSFSLNAFDYVNPNHGMGLVLYFPIRDGVSYEQVFANLQAGLNRTFDLIPALSGKMTDCSEQGIGYTKGDLCVTIPPLAKADSARNRLVYKDLSAVLPSFDDLRKGGFAPSAFSDTLANFVSGGCILAVDLNHCCLDGLGAMVALKAWAENCRYLQGDQSATCGWYDPESFNHSLPEILHRQEGWARPLHEIDPGTWGFLPFFPPEDEETNPRCEKATEGSLPARPIFPLHPVWPLPRAERCLKTTMFLVTPEKLELLQQDVIADPATNGITPSISDIVQAFFWRAAIKARYRVATEIRKQKFSPDAVSILELPTDTRPHFSSRLPPTYMGSMLILNRTSMPIETLCSAETSIAKVALLLRQSAARITPSLVHDAFTLLQSLPGHRRFSTANMGLEHMHAMISNMLLFPTSEIGFGDAFFANGGVPETMRPQLERGNGRFRFLAVFPLRKDGGVELVLGTHREELEMLVTDEEFTRYARMVDTCC.

Positions 1–502 are isocyanide synthase domain; the sequence is MFHKEAGISH…CVKAGYAALF (502 aa). The interval 351–391 is disordered; that stretch reads PSVPVSPGMSSPSAASTSSSGASMQGSAATTPETHSPPTFT. The span at 352-381 shows a compositional bias: low complexity; that stretch reads SVPVSPGMSSPSAASTSSSGASMQGSAATT. Residues 382–391 are compositionally biased toward polar residues; the sequence is PETHSPPTFT. The interval 573-752 is adenylation; it reads EAINDPFCFL…GNLIPPREDW (180 aa). Residues 941-1019 form the Carrier domain; the sequence is SSAHSIEDNV…RLSAIIALLA (79 aa). Position 977 is an O-(pantetheine 4'-phosphoryl)serine (serine 977). A transferase region spans residues 1293–1526; sequence RCLKTTMFLV…LEMLVTDEEF (234 aa).

In the N-terminal section; belongs to the isocyanide synthase family. This sequence in the C-terminal section; belongs to the NRP synthetase family.

Its pathway is secondary metabolite biosynthesis. In terms of biological role, isocyanide synthase-NRPS hybrid; part of the crm gene cluster that mediates the biosynthesis of a yet unidentified copper-responsive metabolite. Converts valine into valine isocyanide that then contributes to two distinct biosynthetic pathways under copper-limiting conditions. Reaction of valine isocyanide with the imine intermediate of festuclavine results in formation of the amide bond in fumivaline A. In addition, valine isocyanide contributes to biosynthesis of a family of acylated sugar alcohols, the D-mannitol-derived fumicicolins. CrmA and associated products inhibit microbial growth from copper-starved A.fumigatus. This chain is Isocyanide synthase-NRPS hybrid crmA, found in Aspergillus fumigatus (strain ATCC MYA-4609 / CBS 101355 / FGSC A1100 / Af293) (Neosartorya fumigata).